We begin with the raw amino-acid sequence, 237 residues long: Lipoprotein-releasing system ATP-binding protein LolD (237 aa).

The ABC transporter domain maps to 16 to 237; the sequence is LKCEGLTRIY…LDQGRLSEDA (222 aa). ATP is bound at residue 52–59; it reads GSSGSGKT.

This sequence belongs to the ABC transporter superfamily. Lipoprotein translocase (TC 3.A.1.125) family. The complex is composed of two ATP-binding proteins (LolD) and two transmembrane proteins (LolC and LolE).

The protein resides in the cell inner membrane. Part of the ABC transporter complex LolCDE involved in the translocation of mature outer membrane-directed lipoproteins, from the inner membrane to the periplasmic chaperone, LolA. Responsible for the formation of the LolA-lipoprotein complex in an ATP-dependent manner. The chain is Lipoprotein-releasing system ATP-binding protein LolD from Chromohalobacter salexigens (strain ATCC BAA-138 / DSM 3043 / CIP 106854 / NCIMB 13768 / 1H11).